The chain runs to 274 residues: Imidazole glycerol phosphate synthase subunit HisF (274 aa).

Residues D11 and D134 contribute to the active site.

This sequence belongs to the HisA/HisF family. As to quaternary structure, heterodimer of HisH and HisF.

The protein resides in the cytoplasm. The enzyme catalyses 5-[(5-phospho-1-deoxy-D-ribulos-1-ylimino)methylamino]-1-(5-phospho-beta-D-ribosyl)imidazole-4-carboxamide + L-glutamine = D-erythro-1-(imidazol-4-yl)glycerol 3-phosphate + 5-amino-1-(5-phospho-beta-D-ribosyl)imidazole-4-carboxamide + L-glutamate + H(+). The protein operates within amino-acid biosynthesis; L-histidine biosynthesis; L-histidine from 5-phospho-alpha-D-ribose 1-diphosphate: step 5/9. Its function is as follows. IGPS catalyzes the conversion of PRFAR and glutamine to IGP, AICAR and glutamate. The HisF subunit catalyzes the cyclization activity that produces IGP and AICAR from PRFAR using the ammonia provided by the HisH subunit. The sequence is that of Imidazole glycerol phosphate synthase subunit HisF from Methanobrevibacter smithii (strain ATCC 35061 / DSM 861 / OCM 144 / PS).